The chain runs to 69 residues: Conotoxin Cal12.1p5 (69 aa).

Positions 1 to 23 (DLITNSYTRGKPRHVTSWRNLKT) are excised as a propeptide.

In terms of processing, contains 4 disulfide bonds. As to expression, expressed by the venom duct.

It localises to the secreted. This Californiconus californicus (California cone) protein is Conotoxin Cal12.1p5.